Here is a 303-residue protein sequence, read N- to C-terminus: Probable RuBisCO transcriptional regulator (303 aa).

One can recognise an HTH lysR-type domain in the interval 6-63; it reads FTLDQLRIFQAIVVEGSFQKAAQSLYISQPAVSLQIQNLEQQLNAPLFDRSHRKAKLT. Positions 23–42 form a DNA-binding region, H-T-H motif; that stretch reads FQKAAQSLYISQPAVSLQIQ.

The protein belongs to the LysR transcriptional regulatory family.

It localises to the plastid. Its subcellular location is the chloroplast. In terms of biological role, trans-acting transcriptional regulator of RuBisCO genes (rbcL and rbcS) expression. The polypeptide is Probable RuBisCO transcriptional regulator (rbcR) (Cyanidioschyzon merolae (strain NIES-3377 / 10D) (Unicellular red alga)).